The sequence spans 495 residues: Cyclic GMP-AMP synthase (495 aa).

Residues 1–128 (MAARRGKSTR…AGATELAAPA (128 aa)) are disordered. The DNA-binding stretch occupies residues 1–134 (MAARRGKSTR…AAPARMEAPP (134 aa)). Lys7 bears the N6-acetyllysine mark. Ser13 is subject to Phosphoserine. Composition is skewed to basic and acidic residues over residues 52 to 76 (CRRE…RAED) and 105 to 116 (RAREARSARELR). Residue Lys56 is modified to N6-acetyllysine. Phosphoserine is present on Ser57. A required for association with the cell membrane region spans residues 57 to 68 (SGPDPREKPQVR). The interval 103–134 (SCRAREARSARELRPQAGATELAAPARMEAPP) is required for activation upon DNA viral infection. Positions 143-148 (LEKVRL) match the Nuclear export signal motif. Lys145 carries the post-translational modification N6-lactoyllysine. The tract at residues 147 to 190 (RLSRHEISEAAEVVNWVVEHLLRRLQGGESEFKGVALLRTGSYY) is DNA-binding. Residue Glu165 is modified to PolyADP-ribosyl glutamic acid. Thr186 lines the GTP pocket. Ser188 carries the phosphoserine modification. Ser188 lines the ATP pocket. Tyr190 bears the Phosphotyrosine mark. Positions 200 and 202 each coordinate Mg(2+). Asp202 contacts 2',3'-cGAMP. Lys206 is covalently cross-linked (Glycyl lysine isopeptide (Lys-Gly) (interchain with G-Cter in SUMO)). Residue Lys260 forms a Glycyl lysine isopeptide (Lys-Gly) (interchain with G-Cter in ubiquitin) linkage. 5-glutamyl polyglutamate is present on Glu261. The Nuclear localization signal signature appears at 268 to 278 (GVTVERKRRGS). Ser278 bears the Phosphoserine mark. Position 294 (Asp294) interacts with GTP. Position 294 (Asp294) interacts with Mg(2+). Asp294 contributes to the 2',3'-cGAMP binding site. The segment at 316 to 357 (SQWLGAKVKNNLKRQPFYLVPKHAKEGSGFQEETWRLSFSHI) is interaction with collided ribosomes. Residue Lys322 forms a Glycyl lysine isopeptide (Lys-Gly) (interchain with G-Cter in SUMO); alternate linkage. A Glycyl lysine isopeptide (Lys-Gly) (interchain with G-Cter in ubiquitin); alternate cross-link involves residue Lys322. 2 residues coordinate 2',3'-cGAMP: Lys337 and Arg351. Position 351–358 (351–358 (RLSFSHIE)) interacts with GTP. Position 358 (Glu358) interacts with ATP. Lys359 carries the post-translational modification N6-acetyllysine. Lys359 participates in a covalent cross-link: Glycyl lysine isopeptide (Lys-Gly) (interchain with G-Cter in SUMO); alternate. Lys359 is covalently cross-linked (Glycyl lysine isopeptide (Lys-Gly) (interchain with G-Cter in ubiquitin); alternate). The tract at residues 359-382 (KDILKNHGQSKTCCEIDGVKCCRK) is DNA-binding. His365 is a Zn(2+) binding site. An N6-acetyllysine modification is found at Lys369. A Glycyl lysine isopeptide (Lys-Gly) (interchain with G-Cter in SUMO) cross-link involves residue Lys369. Residues Cys371, Cys372, and Cys379 each coordinate Zn(2+). 2 S-palmitoyl cysteine lipidation sites follow: Cys379 and Cys380. Residues Lys386, Lys389, Lys396, and Lys397 each participate in a glycyl lysine isopeptide (Lys-Gly) (interchain with G-Cter in ubiquitin) cross-link. N6-acetyllysine is present on Lys389. Lys389 provides a ligand contact to ATP. At Ser410 the chain carries Phosphoserine. 410–414 (SYHVK) lines the ATP pocket. Residue Cys449 is the site of S-palmitoyl cysteine attachment. Lys481 is subject to N6-methyllysine.

The protein belongs to the mab-21 family. In terms of assembly, monomer in the absence of DNA. Homodimer in presence of dsDNA: forms a 2:2 dimer with two enzymes binding to two DNA molecules. Interacts with nucleosomes; interaction is mainly mediated via histones H2A and H2B and inactivates the nucleotidyltransferase activity by blocking DNA-binding and subsequent activation. Interacts with PQBP1 (via WW domain). Interacts with TRIM14; this interaction recruits USP14, leading to deubiquitinate and stabilize CGAS and promote type I interferon production. Interacts with ZCCHC3; promoting sensing of dsDNA by CGAS. Interacts (when not monomethylated) with (poly-ADP-ribosylated) PARP1; interaction takes place in the nucleus and prevents the formation of the PARP1-TIMELESS complex. Interacts (when monomethylated) with SGF29; interaction with SGF29 prevents interaction with PARP1. Interacts with PCBP2; preventing the formation of liquid-like droplets in which CGAS is activated. Interacts with IRGM; promoting CGAS degradation. Requires Mg(2+) as cofactor. Mn(2+) is required as a cofactor. Zn(2+) serves as cofactor. Post-translationally, the N-terminal disordered part (1-134) is phosphorylated by AURKB during the G2-M transition, blocking CGAS liquid phase separation and preventing activation. Phosphorylation at Tyr-190 by BLK promotes cytosolic retention. Localizes into the nucleus following dephosphorylation at Tyr-190. Phosphorylation at Ser-410 activates the nucleotidyltransferase activity. Dephosphorylation at Ser-410 by PPP6C impairs its ability to bind GTP, thereby inactivating it. Phosphorylation at Ser-188 by PRKDC inhibits its cyclic GMP-AMP synthase activity by impairing homodimerization and activation. Phosphorylation at Ser-278 by AKT (AKT1, AKT2 or AKT3) suppresses the nucleotidyltransferase activity. Phosphorylation at Ser-278 by CDK1 during mitosis leads to its inhibition, thereby preventing CGAS activation by self-DNA during mitosis. Dephosphorylated at Ser-278 by protein phosphatase PP1 upon mitotic exit. Ubiquitinated at Lys-389 via 'Lys-48'-linked polyubiquitin chains, leading to its SQSTM1-mediated autophagic degradation. Interaction with TRIM14 promotes recruitment of USP14, leading to deubiquitinate Lys-389 and stabilize CGAS. Ubiquitinated at Lys-359 by RNF185 via 'Lys-27'-linked polyubiquitination, promoting CGAS cyclic GMP-AMP synthase activity. Monoubiquitination at Lys-322 by TRIM56 promotes oligomerization and subsequent activation. Monoubiquitination by TRIM41 promotes CGAS activation. Ubiquitination at Lys-260 via 'Lys-48'-linked polyubiquitination promotes its degradation. Deubiquitination at Lys-260 by USP29 promotes its stabilization. Deubiquitinated by USP27X, promoting its stabilization. Ubiquitinated at Lys-386 via 'Lys-63'-linked polyubiquitin chains by MARCHF8, leading to the inhibition of its DNA binding ability. In cycling cells, nucleosome-bound CGAS is ubiquitinated at Lys-396 and Lys-397 via 'Lys-48'-linked polyubiquitin chains by the ECS(SPSB3) complex, leading to its degradation: ubiquitination and degradation of nuclear CGAS during G1 and G2 phases is required to promote low intranuclear CGAS abundance before the next mitotic cycle. In terms of processing, sumoylated at Lys-206 by TRIM38 in uninfected cells and during the early phase of viral infection, promoting its stability by preventing ubiquitination at Lys-260 and subsequent degradation. Desumoylated by SENP2 during the late phase of viral infection. Sumoylation at Lys-322, Lys-359 and Lys-369 prevents DNA-binding, oligomerization and nucleotidyltransferase activity. Desumoylation at Lys-322, Lys-359 and Lys-369 by SENP7 relieves inhibition and activates CGAS. Post-translationally, polyglutamylated by TTLL6 at Glu-261, leading to impair DNA-binding activity. Deglutamylated by AGBL5/CCP5 and AGBL6/CCP6. Acetylation at Lys-359, Lys-369 and Lys-389 inhibits the cyclic GMP-AMP synthase activity. Deacetylated upon cytosolic DNA challenge such as viral infections. Acetylation by KAT5 increases the cyclic GMP-AMP synthase activity by promoting DNA-binding and subsequent activation. In terms of processing, proteolytically cleaved by apoptotic caspases during apoptosis, leading to its inactivation. The damage of the nucleus and the mitochondria during apoptosis leads to leakage of nuclear and mitochondrial DNA, which activate CGAS: cleavage and inactivation during apoptosis in required to prevent cytokine overproduction. Cleaved by CASP7 and CASP3 during virus-induced apoptosis, thereby inactivating it and preventing cytokine overproduction. Cleaved by CASP1 upon DNA virus infection; the cleavage impairs cGAMP production. Also cleaved by the pyroptotic CASP4 during non-canonical inflammasome activation; does not cut at the same sites than CASP1. Post-translationally, degraded via selective autophagy following interaction with IRGM. IRGM promotes CGAS recruitment to autophagosome membranes, promoting its SQSTM1/p62-dependent autophagic degradation. Poly-ADP-ribosylation at Glu-165 by PARP1 impairs DNA-binding, thereby preventing the cyclic GMP-AMP synthase activity. In terms of processing, palmitoylation at Cys-449 by ZDHHC18 impairs DNA-binding, thereby preventing the cyclic GMP-AMP synthase activity. Palmitoylation at Cys-379 and Cys-380 by ZDHHC9 promotes homodimerization and cyclic GMP-AMP synthase activity. Depalmitoylation at Cys-379 and Cys-380 by LYPLAL1 impairs homodimerization and cyclic GMP-AMP synthase activity. Post-translationally, monomethylated at Lys-481 by SETD7. Monomethylation promotes interaction with SGF29, preventing interaction between PARP1 nad SGF29. Demethylation by RIOX1 promotes interaction with PARP1, followed by PARP1 inactivation. Lactylation by AARS2 prevents ability to undergo liquid-liquid phase separation (LLPS), thereby inhibiting CGAS activation.

Its subcellular location is the nucleus. It is found in the chromosome. The protein resides in the cell membrane. The protein localises to the cytoplasm. It localises to the cytosol. The catalysed reaction is GTP + ATP = 2',3'-cGAMP + 2 diphosphate. The enzyme catalyses GTP + ATP = pppGp(2'-5')A + diphosphate. It catalyses the reaction pppGp(2'-5')A = 2',3'-cGAMP + diphosphate. With respect to regulation, the enzyme activity is strongly increased by double-stranded DNA (dsDNA), but not by single-stranded DNA or RNA. DNA-binding induces the formation of liquid-like droplets in which CGAS is activated. Liquid-like droplets also create a selective environment that restricts entry of negative regulators, such as TREX1 or BANF1/BAF, allowing sensing of DNA. A number of mechanisms exist to restrict its activity toward self-DNA. The nucleotidyltransferase activity is inhibited in the nucleus via its association with nucleosomes: interacts with the acidic patch of histones H2A and H2B, thereby blocking DNA-binding and subsequent activation. CGAS is also inactive when associated with mitotic chromatin. Chromatin-bound CGAS cannot be activated by exogenous DNA in mitotic cells: phosphorylation of the N-terminal disordered part by AURKB during the G2-M transition blocks CGAS liquid phase separation and activation. Activity toward self-DNA is inhibited by BANF1/BAF upon acute loss of nuclear membrane integrity: BANF1/BAF acts by outcompeting CGAS for DNA-binding, thereby preventing CGAS activation. DNA-induced activation at micronuclei is also limited by TREX1, which degrades micronuclear DNA upon nuclear envelope rupture, thereby preventing CGAS activation. CGAS can be released from nucleosomes and activated by MRE11 component of the MRN complex, which displaces CGAS from acidic-patch-mediated sequestration. Acetylation at Lys-359, Lys-369 and Lys-389 inhibits the cyclic GMP-AMP synthase activity. Acetylation by KAT5 increases the cyclic GMP-AMP synthase activity by promoting DNA-binding and subsequent activation. Phosphorylation at Ser-278 suppresses the nucleotidyltransferase activity. Phosphorylation at Ser-410 promotes the cyclic GMP-AMP synthase activity. Phosphorylation at Ser-188 inhibits its cyclic GMP-AMP synthase activity. Ubiquitination at Lys-359 via 'Lys-27'-linked polyubiquitination enhances the cyclic GMP-AMP synthase activity. Monoubiquitination at Lys-322 promotes oligomerization and subsequent activation. Sumoylation at Lys-322, Lys-359 and Lys-369 prevents DNA-binding, oligomerization and nucleotidyltransferase activity. The enzyme activity is impaired by the cleavage by CASP1. In addition to DNA, also activated by collided ribosomes upon translation stress: specifically binds collided ribosomes, promoting its activation and triggering type-I interferon production. Nucleotidyltransferase that catalyzes the formation of cyclic GMP-AMP (2',3'-cGAMP) from ATP and GTP and plays a key role in innate immunity. Catalysis involves both the formation of a 2',5' phosphodiester linkage at the GpA step and the formation of a 3',5' phosphodiester linkage at the ApG step, producing c[G(2',5')pA(3',5')p]. Acts as a key DNA sensor: directly binds double-stranded DNA (dsDNA), inducing the formation of liquid-like droplets in which CGAS is activated, leading to synthesis of 2',3'-cGAMP, a second messenger that binds to and activates STING1, thereby triggering type-I interferon production. Preferentially binds long dsDNA (around 45 bp) and forms ladder-like networks that function cooperatively to stabilize individual cGAS-dsDNA complexes. Acts as a key foreign DNA sensor, the presence of double-stranded DNA (dsDNA) in the cytoplasm being a danger signal that triggers the immune responses. Has antiviral activity by sensing the presence of dsDNA from DNA viruses in the cytoplasm. Also acts as an innate immune sensor of infection by retroviruses by detecting the presence of reverse-transcribed DNA in the cytosol. Detection of retroviral reverse-transcribed DNA in the cytosol may be indirect and be mediated via interaction with PQBP1, which directly binds reverse-transcribed retroviral DNA. Also detects the presence of DNA from bacteria. 2',3'-cGAMP can be transferred from producing cells to neighboring cells through gap junctions, leading to promote STING1 activation and convey immune response to connecting cells. 2',3'-cGAMP can also be transferred between cells by virtue of packaging within viral particles contributing to IFN-induction in newly infected cells in a cGAS-independent but STING1-dependent manner. Also senses the presence of neutrophil extracellular traps (NETs) that are translocated to the cytosol following phagocytosis, leading to synthesis of 2',3'-cGAMP. In addition to foreign DNA, can also be activated by endogenous nuclear or mitochondrial DNA. When self-DNA leaks into the cytosol during cellular stress (such as mitochondrial stress, DNA damage, mitotic arrest or senescence), or is present in form of cytosolic micronuclei, CGAS is activated leading to a state of sterile inflammation. Acts as a regulator of cellular senescence by binding to cytosolic chromatin fragments that are present in senescent cells, leading to trigger type-I interferon production via STING1 and promote cellular senescence. Also involved in the inflammatory response to genome instability and double-stranded DNA breaks: acts by localizing to micronuclei arising from genome instability. Micronuclei, which are frequently found in cancer cells, consist of chromatin surrounded by their own nuclear membrane: following breakdown of the micronuclear envelope, a process associated with chromothripsis, CGAS binds self-DNA exposed to the cytosol, leading to 2',3'-cGAMP synthesis and subsequent activation of STING1 and type-I interferon production. In a healthy cell, CGAS is however kept inactive even in cellular events that directly expose it to self-DNA, such as mitosis, when cGAS associates with chromatin directly after nuclear envelope breakdown or remains in the form of postmitotic persistent nuclear cGAS pools bound to chromatin. Nuclear CGAS is inactivated by chromatin via direct interaction with nucleosomes, which block CGAS from DNA binding and thus prevent CGAS-induced autoimmunity. Also acts as a suppressor of DNA repair in response to DNA damage: inhibits homologous recombination repair by interacting with PARP1, the CGAS-PARP1 interaction leading to impede the formation of the PARP1-TIMELESS complex. In addition to DNA, also sense translation stress: in response to translation stress, translocates to the cytosol and associates with collided ribosomes, promoting its activation and triggering type-I interferon production. This chain is Cyclic GMP-AMP synthase, found in Sus scrofa (Pig).